The sequence spans 73 residues: Conotoxin Gla(3)-TxVI (73 aa).

The first 19 residues, 1–19 (MQKLIILLLVAAVLMSAQA), serve as a signal peptide directing secretion. A propeptide spanning residues 20–44 (VLQEKRPKEKIKFLSKRKTDAEKQQ) is cleaved from the precursor. 3 disulfides stabilise this stretch: Cys-48–Cys-62, Cys-55–Cys-66, and Cys-61–Cys-71. Pro-49 carries the post-translational modification 4-hydroxyproline. Glu-53 is subject to 4-carboxyglutamate; partial. Position 54 is a 4-hydroxyproline (Pro-54). Glu-60 carries the post-translational modification 4-carboxyglutamate. Residue Trp-64 is modified to 6'-bromotryptophan.

The protein belongs to the conotoxin O2 superfamily. Expressed by the venom duct.

The protein localises to the secreted. This is Conotoxin Gla(3)-TxVI from Conus textile (Cloth-of-gold cone).